The chain runs to 241 residues: Nopaline transport system permease protein NocM (241 aa).

Positions 17–215 constitute an ABC transmembrane type-1 domain; that stretch reads VPTTLTLAFI…FITFVVSRLV (199 aa). The next 5 helical transmembrane spans lie at 21–41, 52–72, 95–115, 161–181, and 191–211; these read LTLA…VALM, LAYG…MFLI, PWFC…SEII, VMLI…EVTG, and YSPV…TFVV.

Belongs to the binding-protein-dependent transport system permease family. HisMQ subfamily.

Its subcellular location is the cell inner membrane. Functionally, component of the nopaline active transport system probably consisting of four subunits: Q, M, P and T. This system is also capable of transporting octopine provided that catabolic functions are induced with nopaline. This is Nopaline transport system permease protein NocM (nocM) from Agrobacterium fabrum (strain C58 / ATCC 33970) (Agrobacterium tumefaciens (strain C58)).